The chain runs to 701 residues: Transcription factor PDR8 (701 aa).

Residues 1–22 (MDGSHFPMKSTTGEPVSSGKKG) form a disordered region. A DNA-binding region (zn(2)-C6 fungal-type) is located at residues 31 to 59 (CAFCRKRKLKCSQARPMCQQCVIRKLPQC).

The protein localises to the cytoplasm. It localises to the nucleus. Its function is as follows. Up-regulates the transcription of the genes for ATP-binding cassette (ABC) transporters YOR1 and PDR15, for major facilitator superfamily transporter AZR1, for pleiotropic drug resistance SNG1, for alpha-glucosidase YJL216C and for YLL056C. The sequence is that of Transcription factor PDR8 (PDR8) from Saccharomyces cerevisiae (strain ATCC 204508 / S288c) (Baker's yeast).